An 866-amino-acid chain; its full sequence is Thiamine diphosphate dependent-3-acetyloctanal synthase PigD (866 aa).

The segment at 826 to 866 (KGWQRDPSDREALQERKDWAARQPESTSTSFDQGQNKEAIS) is disordered. Residues 828–845 (WQRDPSDREALQERKDWA) are compositionally biased toward basic and acidic residues. The span at 849–866 (PESTSTSFDQGQNKEAIS) shows a compositional bias: polar residues.

The protein belongs to the TPP enzyme family. The cofactor is thiamine diphosphate.

It catalyses the reaction (2E)-octenal + pyruvate + H(+) = (S)-3-acetyloctanal + CO2. It participates in antibiotic biosynthesis; prodigiosin biosynthesis. In terms of biological role, involved in the biosynthesis of 2-methyl-3-n-amyl-pyrrole (MAP), one of the terminal products involved in the biosynthesis of the red antibiotic prodigiosin (Pig). Catalyzes the decarboxylation of pyruvate, followed by the modification of the resulting two-carbon fragment acetaldehyde at the C3 position of the 2-octenal (1,2-addition of acetaldehyde) giving 3-acetyloctanal. The sequence is that of Thiamine diphosphate dependent-3-acetyloctanal synthase PigD from Serratia sp. (strain ATCC 39006) (Prodigiosinella confusarubida).